Reading from the N-terminus, the 78-residue chain is Large ribosomal subunit protein uL30 (78 aa).

Positions 58-68 (DDTSPDAETGA) are enriched in acidic residues. A disordered region spans residues 58 to 78 (DDTSPDAETGADLERDGGNRS). A compositionally biased stretch (basic and acidic residues) spans 69-78 (DLERDGGNRS).

It belongs to the universal ribosomal protein uL30 family. As to quaternary structure, part of the 50S ribosomal subunit.

The chain is Large ribosomal subunit protein uL30 from Roseiflexus sp. (strain RS-1).